The primary structure comprises 1614 residues: Low-density lipoprotein receptor-related protein 5 (1614 aa).

An N-terminal signal peptide occupies residues 1–30 (METAPTRAPPPPPPPLLLLVLYCSLVPAAA). Residues 31-287 (SPLLLFANRR…YSPMDIQVLS (257 aa)) are beta-propeller 1. The Extracellular portion of the chain corresponds to 31–1383 (SPLLLFANRR…PPSDDIPAHS (1353 aa)). LDL-receptor class B repeat units lie at residues 74-118 (GAVY…DWVG), 119-161 (KKLY…DPAH), 162-205 (GYMY…DLEE), 206-246 (QKLY…TLSG), and 247-289 (DTLY…LSQE). N-linked (GlcNAc...) asparagine glycans are attached at residues asparagine 92 and asparagine 137. The region spanning 294–336 (FHTPCEEDNGGCSHLCLLSPREPFYSCACPTGVQLQDNGKTCK) is the EGF-like 1 domain. 3 disulfide bridges follow: cysteine 298-cysteine 309, cysteine 305-cysteine 320, and cysteine 322-cysteine 335. The beta-propeller 2 stretch occupies residues 340-601 (EEVLLLARRT…AVNVAKVVGT (262 aa)). LDL-receptor class B repeat units lie at residues 384–426 (GYVY…DWVA), 427–469 (RNLY…HPVM), 470–513 (GLMY…DLQE), 514–556 (GKLY…LGDF), and 557–599 (IYWT…AKVV). 2 N-linked (GlcNAc...) asparagine glycosylation sites follow: asparagine 445 and asparagine 498. Residues 600–640 (GTNPCADGNGGCSHLCFFTPRATKCGCPIGLELLSDMKTCI) enclose the EGF-like 2 domain. 3 cysteine pairs are disulfide-bonded: cysteine 604–cysteine 615, cysteine 611–cysteine 624, and cysteine 626–cysteine 639. Residues 643 to 902 (EAFLVFTSRA…VFHSSRQDGL (260 aa)) form a beta-propeller 3 region. LDL-receptor class B repeat units follow at residues 686–728 (NHIY…DWMG), 729–771 (KNLY…DPTK), 772–814 (GYIY…DYAD), 815–854 (QRLY…TQYS), and 855–897 (DYIY…FHSS). Asparagine 704 carries N-linked (GlcNAc...) asparagine glycosylation. Asparagine 877 is a glycosylation site (N-linked (GlcNAc...) asparagine). In terms of domain architecture, EGF-like 3 spans 901-941 (GLNDCVHSNGQCGQLCLAIPGGHRCGCASHYTLDPSSRNCS). 3 disulfide bridges follow: cysteine 905/cysteine 916, cysteine 912/cysteine 925, and cysteine 927/cysteine 940. Residues 944-1211 (STFLLFSQKF…AVEEVSLEEF (268 aa)) are beta-propeller 4. LDL-receptor class B repeat units follow at residues 988–1034 (KFIY…DIYS), 1035–1077 (RTLF…NAER), 1078–1122 (GYMY…DNAL), 1123–1164 (GKLF…VLGR), and 1165–1206 (HLYW…VEEV). Residues 1002–1025 (AKDDGTQPSMLTSPSQSLSPDRQP) are disordered. Residues 1007–1021 (TQPSMLTSPSQSLSP) show a composition bias toward polar residues. Residues 1212-1253 (SAHPCARDNGGCSHICIAKGDGTPRCSCPVHLVLLQNLLTCG) enclose the EGF-like 4 domain. Disulfide bonds link cysteine 1216–cysteine 1227, cysteine 1223–cysteine 1237, cysteine 1239–cysteine 1252, cysteine 1258–cysteine 1272, cysteine 1265–cysteine 1285, cysteine 1279–cysteine 1294, cysteine 1297–cysteine 1309, cysteine 1304–cysteine 1322, cysteine 1316–cysteine 1331, cysteine 1335–cysteine 1347, cysteine 1342–cysteine 1360, and cysteine 1354–cysteine 1369. LDL-receptor class A domains follow at residues 1257-1295 (TCSP…EGCP), 1296-1332 (VCSA…ANCD), and 1334-1370 (VCLP…LMCE). Residues 1384–1406 (SAIGPVIGIILSLFVMGGVYFVC) traverse the membrane as a helical segment. Residues 1407–1614 (QRVMCQRYTG…PPPSPCTDSS (208 aa)) are Cytoplasmic-facing. The interval 1474–1498 (RNHVTGASSSSSSSTKATLYPPILN) is disordered. The short motif at 1499–1505 (PPPSPAT) is the PPPSP motif A element. Residues 1537 to 1544 (PPTTPCST) carry the PPPSP motif B motif. Residues 1567 to 1599 (SDSDPYPPPPTPHSQYLSAEDSCPPSPGTERSY) are disordered. Residues 1573 to 1580 (PPPPTPHS) carry the PPPSP motif C motif. The short motif at 1590–1595 (PPSPGT) is the PPPSP motif D element. A PPPSP motif E motif is present at residues 1604 to 1611 (PPPPSPCT).

It belongs to the LDLR family. As to quaternary structure, homodimer; disulfide-linked. Forms phosphorylated oligomer aggregates on Wnt-signaling. Component of a WNT-signaling complex that contains a WNT protein, a FZD protein and LRP5 or LRP6. Interacts with FZD8; the interaction is formed on WNT-binding and signaling. Interacts (via the phosphorylated PPPSP motif domains) with AXIN1; the interaction prevents inhibition of beta-catenin phosphorylation and signaling and is enhanced in the presence of GSK3B and WNT1 or WNT3A. Interacts (via beta-propeller regions 3 and 4) with DKK1; the interaction, enhanced by MESD and/or KREMEN, inhibits beta-catenin signaling by preventing GSK3-mediated phosphorylation of the PPPSP motifs and subsequent, AXIN1 binding. Interacts with CSNK1E. Interacts with SOST; the interaction antagonizes canonical Wnt signaling. Interacts with APCDD1. Interacts with MESD; the interaction prevents the formation of LRP5 aggregates, targets LRP5 to the plasma membrane and, when complexed with KREMEN2, increases DKK1 binding. Interacts with CAPRIN2. In terms of processing, phosphorylation of cytoplasmic PPPSP motifs regulates the signal transduction of the Wnt signaling pathway through acting as a docking site for AXIN1. As to expression, widely expressed, with the highest expression levels in liver, heart, and lung and the lowest levels in brain and spleen.

It localises to the membrane. The protein resides in the endoplasmic reticulum. Its function is as follows. Acts as a coreceptor with members of the frizzled family of seven-transmembrane spanning receptors to transduce signal by Wnt proteins. Activates the canonical Wnt signaling pathway that controls cell fate determination and self-renewal during embryonic development and adult tissue regeneration. In particular, may play an important role in the development of the posterior patterning of the epiblast during gastrulation. During bone development, regulates osteoblast proliferation and differentiation thus determining bone mass. Mechanistically, the formation of the signaling complex between Wnt ligand, frizzled receptor and LRP5 coreceptor promotes the recruitment of AXIN1 to LRP5, stabilizing beta-catenin/CTNNB1 and activating TCF/LEF-mediated transcriptional programs. Acts as a coreceptor for non-Wnt proteins, such as norrin/NDP. Binding of norrin/NDP to frizzled 4/FZD4-LRP5 receptor complex triggers beta-catenin/CTNNB1-dependent signaling known to be required for retinal vascular development. Plays a role in controlling postnatal vascular regression in retina via macrophage-induced endothelial cell apoptosis. The sequence is that of Low-density lipoprotein receptor-related protein 5 from Mus musculus (Mouse).